The primary structure comprises 407 residues: Substance-P receptor (407 aa).

Topologically, residues 1-31 (MDNVLQVDSDLFPNISTNTSEPNQFVQPAWQ) are extracellular. Asn-14 and Asn-18 each carry an N-linked (GlcNAc...) asparagine glycan. The helical transmembrane segment at 32–54 (IVLWAAAYTVIVVTSVVGNVVVM) threads the bilayer. The Cytoplasmic portion of the chain corresponds to 55-64 (WIILAHKRMR). Residues 65 to 86 (TVTNYFLVNLAFAEASMAAFNT) form a helical membrane-spanning segment. Over 87 to 106 (VVNFTYAVHNEWYYGLFYCK) the chain is Extracellular. A disulfide bond links Cys-105 and Cys-180. The chain crosses the membrane as a helical span at residues 107 to 128 (FHNFFPIAAVFASIYSMTAVAF). The Cytoplasmic portion of the chain corresponds to 129–148 (DRYMAIIHPLQPRLSATATK). Residues 149–169 (VVICVIWVLALLLAFPQGYYS) traverse the membrane as a helical segment. Residues 170-194 (TTETMPNRVVCMIEWPEHPNKIYEK) are Extracellular-facing. Residues 195 to 219 (VYHICVTVLIYFLPLLVIGYAYTVV) form a helical membrane-spanning segment. Residues 220–248 (GITLWASEIPGDSSDRYHEQVSAKRKVVK) are Cytoplasmic-facing. A helical transmembrane segment spans residues 249–270 (MMIVVVCTFAICWLPFHIFFLL). Residues 271-283 (PYINPDLYLEKFI) lie on the Extracellular side of the membrane. The chain crosses the membrane as a helical span at residues 284-308 (QQVYLAIMWLAMSSTMYNPIIYCCL). The Cytoplasmic segment spans residues 309–407 (NDRFRLGFKH…SFSFYSNMLS (99 aa)). Cys-322 is lipidated: S-palmitoyl cysteine. Residues 365 to 394 (HEEELEDGPKTTPSSLDLTSNGSSRSDSKT) form a disordered region. Polar residues predominate over residues 375–394 (TTPSSLDLTSNGSSRSDSKT).

The protein belongs to the G-protein coupled receptor 1 family. Interacts with ARRB1.

The protein resides in the cell membrane. In terms of biological role, this is a receptor for the tachykinin neuropeptide substance P. It is probably associated with G proteins that activate a phosphatidylinositol-calcium second messenger system. The sequence is that of Substance-P receptor (TACR1) from Canis lupus familiaris (Dog).